A 136-amino-acid chain; its full sequence is Large ribosomal subunit protein uL16 (136 aa).

It belongs to the universal ribosomal protein uL16 family. Part of the 50S ribosomal subunit.

Its function is as follows. Binds 23S rRNA and is also seen to make contacts with the A and possibly P site tRNAs. This Vesicomyosocius okutanii subsp. Calyptogena okutanii (strain HA) protein is Large ribosomal subunit protein uL16.